A 627-amino-acid chain; its full sequence is Chaperone protein DnaK (627 aa).

Position 197 is a phosphothreonine; by autocatalysis (threonine 197). A compositionally biased stretch (low complexity) spans 596–615; sequence MYAQGGDQGQQAAPQQEQSG. A disordered region spans residues 596-627; it reads MYAQGGDQGQQAAPQQEQSGDNVEDVEFEEVK. Acidic residues predominate over residues 617 to 627; that stretch reads NVEDVEFEEVK.

Belongs to the heat shock protein 70 family.

In terms of biological role, acts as a chaperone. In Flavobacterium johnsoniae (strain ATCC 17061 / DSM 2064 / JCM 8514 / BCRC 14874 / CCUG 350202 / NBRC 14942 / NCIMB 11054 / UW101) (Cytophaga johnsonae), this protein is Chaperone protein DnaK.